The following is a 613-amino-acid chain: MKKAKLIFKDNTPFSLDFDDFYFNSKDGLNESKFVYTHSFEWKNQENFIITESGFGIGLNFFLTLKRFLETTPSKRPKKLFYISVEAFYIEKEQLREIYQKLRFYEEFKELLEHFLKFYPKAKEGIYRFYFEDCFLDLVFEDITILKELDFKADVWYLDGFSPNKNSQMFDENLIFEVARLSKKNTQICTFSSASFLQKNLKKYGFRVEKTKGFRKREMIKAYLENELEFKDKEAYFSRTFSSLKNKKVAIIGAGISSAVLAYELSLRGFKIDVFEKHLELGKGASGNESGILSSLILKSKVKLGEFSELSFIEASRFYRQILDLNFKGVVEFAHNDLMQERFDTQRENVLFKISKNQAFLEEGGVIFPKNLVKNLFEKSKACIYFNHEFQAYKFENECFTLKFKNDIVKSDYAVLIYAMGADTKDFVFYDEMKLSKVRGQVTHLKPFLDTQFPLSSKAYICPIKDDLQVIGASYDRLDASLESKEEDDKQNIENIAEFIDKNTKLEIIGSKVGFRSYSSDRFMIVGNAYDEAFYKEEYKALLWTKDKEQKPAKMSCNLYFNFAHGSRGFSTSVLAARYLCALINNEPLCLEKKYIHAIHPARFLVRKLKKGL.

The tract at residues Met1–Glu225 is tRNA (mnm(5)s(2)U34)-methyltransferase. The segment at Ile252–Leu613 is FAD-dependent cmnm(5)s(2)U34 oxidoreductase.

It in the N-terminal section; belongs to the methyltransferase superfamily. tRNA (mnm(5)s(2)U34)-methyltransferase family. The protein in the C-terminal section; belongs to the DAO family. FAD is required as a cofactor.

It localises to the cytoplasm. It carries out the reaction 5-aminomethyl-2-thiouridine(34) in tRNA + S-adenosyl-L-methionine = 5-methylaminomethyl-2-thiouridine(34) in tRNA + S-adenosyl-L-homocysteine + H(+). Catalyzes the last two steps in the biosynthesis of 5-methylaminomethyl-2-thiouridine (mnm(5)s(2)U) at the wobble position (U34) in tRNA. Catalyzes the FAD-dependent demodification of cmnm(5)s(2)U34 to nm(5)s(2)U34, followed by the transfer of a methyl group from S-adenosyl-L-methionine to nm(5)s(2)U34, to form mnm(5)s(2)U34. In Campylobacter jejuni subsp. doylei (strain ATCC BAA-1458 / RM4099 / 269.97), this protein is tRNA 5-methylaminomethyl-2-thiouridine biosynthesis bifunctional protein MnmC.